The following is a 590-amino-acid chain: Protein Spindly (590 aa).

Residues 1 to 401 (MSDLEDEIKV…SMARMKALSE (401 aa)) are a coiled coil. A disordered region spans residues 446–590 (NKAQVQKRRR…KTMANECAQQ (145 aa)). Basic and acidic residues-rich tracts occupy residues 483-497 (SNEKAEEKTPSHPVE) and 518-527 (RESKSVRICE). Polar residues-rich tracts occupy residues 541–554 (VNDSNSKNVDQTHQ) and 572–590 (QQPTHVSSQKTMANECAQQ).

The protein belongs to the Spindly family.

Its subcellular location is the chromosome. It is found in the centromere. The protein localises to the kinetochore. Functionally, required for the localization of dynein and dynactin to the mitotic kintochore. Dynein is believed to control the initial lateral interaction between the kinetochore and spindle microtubules and to facilitate the subsequent formation of end-on kinetochore-microtubule attachments mediated by the NDC80 complex. May act as an adapter protein linking the dynein motor complex to various cargos. The protein is Protein Spindly (spdl1) of Danio rerio (Zebrafish).